Consider the following 296-residue polypeptide: Homoserine kinase (296 aa).

84-94 is an ATP binding site; sequence PLARGLGSSSS.

Belongs to the GHMP kinase family. Homoserine kinase subfamily.

It localises to the cytoplasm. It carries out the reaction L-homoserine + ATP = O-phospho-L-homoserine + ADP + H(+). The protein operates within amino-acid biosynthesis; L-threonine biosynthesis; L-threonine from L-aspartate: step 4/5. Functionally, catalyzes the ATP-dependent phosphorylation of L-homoserine to L-homoserine phosphate. In Lactococcus lactis subsp. cremoris (strain SK11), this protein is Homoserine kinase.